A 183-amino-acid polypeptide reads, in one-letter code: UPF0398 protein LSL_0930 (183 aa).

This sequence belongs to the UPF0398 family.

The sequence is that of UPF0398 protein LSL_0930 from Ligilactobacillus salivarius (strain UCC118) (Lactobacillus salivarius).